We begin with the raw amino-acid sequence, 605 residues long: Anaerobic ribonucleoside-triphosphate reductase (605 aa).

The dCTP site is built by His64 and His66. Residues His64, His66, Asp67, Glu100, and Lys103 each contribute to the dGTP site. DCTP-binding positions include Glu100, Lys103, Gln114, Lys146, and 445 to 448; that span reads AENL. Residues Glu100, Lys103, Gln114, and Lys146 each contribute to the dATP site. Glu100 contacts dTTP. DTTP is bound by residues Gln114 and Lys146. DGTP contacts are provided by Lys146, Asn447, and Leu448. Residues 482 to 605 enclose the Glycine radical domain; the sequence is ENITPFEKIS…KEIMHRVKHQ (124 aa). Zn(2+) contacts are provided by Cys543, Cys546, Cys561, and Cys564. The residue at position 580 (Gly580) is a Glycine radical.

Belongs to the anaerobic ribonucleoside-triphosphate reductase family. In terms of assembly, homodimer. Forms a tetramer composed of two NrdD and two NrdG subunits.

The enzyme catalyses a ribonucleoside 5'-triphosphate + formate + H(+) = a 2'-deoxyribonucleoside 5'-triphosphate + CO2 + H2O. With respect to regulation, activated under anaerobic conditions by NrdG, a tightly associated activase. Activation involves the formation of a glycyl radical at Gly-580. In terms of biological role, catalyzes the conversion of ribonucleotides into deoxyribonucleotides, which are required for DNA synthesis and repair. This Enterobacteria phage T4 (Bacteriophage T4) protein is Anaerobic ribonucleoside-triphosphate reductase.